A 313-amino-acid chain; its full sequence is uncharacterized protein (313 aa).

It to M.jannaschii MJ0977 C-terminal region.

This is an uncharacterized protein from Methanocaldococcus jannaschii (strain ATCC 43067 / DSM 2661 / JAL-1 / JCM 10045 / NBRC 100440) (Methanococcus jannaschii).